A 147-amino-acid chain; its full sequence is UPF0208 membrane protein PM0703 (147 aa).

2 helical membrane-spanning segments follow: residues 32 to 52 and 65 to 85; these read VIKATLFAQKFMPFLAVFAIT and LAIAVFSAIVALLIPLQGLYW.

The protein belongs to the UPF0208 family.

The protein resides in the cell inner membrane. This is UPF0208 membrane protein PM0703 from Pasteurella multocida (strain Pm70).